The chain runs to 479 residues: Probable xyloglucan galactosyltransferase GT15 (479 aa).

Residues 1 to 20 lie on the Cytoplasmic side of the membrane; it reads MKNNNSSSVSIENHPWKKKP. The helical; Signal-anchor for type II membrane protein transmembrane segment at 21–40 threads the bilayer; the sequence is TTLLLFLSLLSISLLLLRLS. Over 41–479 the chain is Lumenal; sequence QDKIILITTT…GIRRNEFKTD (439 aa). Asparagine 155, asparagine 242, asparagine 285, and asparagine 391 each carry an N-linked (GlcNAc...) asparagine glycan.

The protein belongs to the glycosyltransferase 47 family. As to expression, expressed in roots, hypocotyls, cotyledons, leaves, stems and sepals.

Its subcellular location is the golgi apparatus membrane. Its function is as follows. Functions in xyloglucan synthesis by adding side chains to the xylosylated glucan backbone. Involved in the galactosylation of hemicellulose xyloglucan. The polypeptide is Probable xyloglucan galactosyltransferase GT15 (Arabidopsis thaliana (Mouse-ear cress)).